The primary structure comprises 317 residues: UV DNA damage endonuclease (317 aa).

The protein belongs to the uve1/UvsE family.

Component in a DNA repair pathway. Removal of UV LIGHT damaged nucleotides. Recognizes pyrimidine dimers and cleave a phosphodiester bond immediately 5' to the lesion. The chain is UV DNA damage endonuclease from Bacillus cereus (strain G9842).